The following is a 205-amino-acid chain: ATP synthase subunit b (205 aa).

An N-terminal signal peptide occupies residues 1-27; it reads MKLNKKHLVAILSVLSLSIIVVPLLTS. C28 carries N-palmitoyl cysteine lipidation. C28 carries the S-diacylglycerol cysteine lipid modification. A helical transmembrane segment spans residues 48–68; it reads VWVFIAQVIAMCVVFSLVLWL.

This sequence belongs to the ATPase B chain family. F-type ATPases have 2 components, F(1) - the catalytic core - and F(0) - the membrane proton channel. F(1) has five subunits: alpha(3), beta(3), gamma(1), delta(1), epsilon(1). F(0) has three main subunits: a(1), b(2) and c(10-14). The alpha and beta chains form an alternating ring which encloses part of the gamma chain. F(1) is attached to F(0) by a central stalk formed by the gamma and epsilon chains, while a peripheral stalk is formed by the delta and b chains.

It is found in the cell membrane. Its function is as follows. F(1)F(0) ATP synthase produces ATP from ADP in the presence of a proton or sodium gradient. F-type ATPases consist of two structural domains, F(1) containing the extramembraneous catalytic core and F(0) containing the membrane proton channel, linked together by a central stalk and a peripheral stalk. During catalysis, ATP synthesis in the catalytic domain of F(1) is coupled via a rotary mechanism of the central stalk subunits to proton translocation. Component of the F(0) channel, it forms part of the peripheral stalk, linking F(1) to F(0). The polypeptide is ATP synthase subunit b (Ureaplasma parvum serovar 3 (strain ATCC 27815 / 27 / NCTC 11736)).